A 193-amino-acid chain; its full sequence is uncharacterized protein (193 aa).

Disordered stretches follow at residues 1 to 21 (MPKG…APPL), 53 to 96 (GAPA…PWPS), and 114 to 136 (SGPE…ASAS). Over residues 53–70 (GAPAGGAPAAGGRSLPQG) the composition is skewed to low complexity. Residues 71–95 (PSAPAPPPPPGLGPPSERPCPPPWP) show a composition bias toward pro residues. The span at 116–127 (PEAAASPLAPGP) shows a compositional bias: low complexity.

This is an uncharacterized protein from Bos taurus (Bovine).